The following is a 365-amino-acid chain: Phospho-N-acetylmuramoyl-pentapeptide-transferase (365 aa).

A run of 10 helical transmembrane segments spans residues Thr19–Ala39, Leu49–Pro69, Ala92–Val112, Phe116–Val136, Leu156–Thr176, Ile183–Val203, Val215–Ala235, Asn238–His258, Leu279–Phe299, and Gln345–Ala365.

This sequence belongs to the glycosyltransferase 4 family. MraY subfamily. Requires Mg(2+) as cofactor.

The protein resides in the cell inner membrane. The catalysed reaction is UDP-N-acetyl-alpha-D-muramoyl-L-alanyl-gamma-D-glutamyl-meso-2,6-diaminopimeloyl-D-alanyl-D-alanine + di-trans,octa-cis-undecaprenyl phosphate = di-trans,octa-cis-undecaprenyl diphospho-N-acetyl-alpha-D-muramoyl-L-alanyl-D-glutamyl-meso-2,6-diaminopimeloyl-D-alanyl-D-alanine + UMP. It functions in the pathway cell wall biogenesis; peptidoglycan biosynthesis. Functionally, catalyzes the initial step of the lipid cycle reactions in the biosynthesis of the cell wall peptidoglycan: transfers peptidoglycan precursor phospho-MurNAc-pentapeptide from UDP-MurNAc-pentapeptide onto the lipid carrier undecaprenyl phosphate, yielding undecaprenyl-pyrophosphoryl-MurNAc-pentapeptide, known as lipid I. The chain is Phospho-N-acetylmuramoyl-pentapeptide-transferase from Synechocystis sp. (strain ATCC 27184 / PCC 6803 / Kazusa).